The primary structure comprises 733 residues: Polyribonucleotide nucleotidyltransferase (733 aa).

Residues Asp488 and Asp494 each contribute to the Mg(2+) site. In terms of domain architecture, KH spans 555-614 (PRIEVMNIAVDKIRDVIGTGGKVIREIVEQTGAKINIEDDGTIRIASADAKTIEAAKRWI). The region spanning 624–692 (GVIYQGTVVK…ERGKVRLSMK (69 aa)) is the S1 motif domain. The segment covering 711-722 (EQEKYTEETHKS) has biased composition (basic and acidic residues). Residues 711–733 (EQEKYTEETHKSENKRRRKKKEE) form a disordered region. A compositionally biased stretch (basic residues) spans 723–733 (ENKRRRKKKEE).

This sequence belongs to the polyribonucleotide nucleotidyltransferase family. Mg(2+) is required as a cofactor.

It is found in the cytoplasm. The catalysed reaction is RNA(n+1) + phosphate = RNA(n) + a ribonucleoside 5'-diphosphate. Functionally, involved in mRNA degradation. Catalyzes the phosphorolysis of single-stranded polyribonucleotides processively in the 3'- to 5'-direction. In Bartonella henselae (strain ATCC 49882 / DSM 28221 / CCUG 30454 / Houston 1) (Rochalimaea henselae), this protein is Polyribonucleotide nucleotidyltransferase.